We begin with the raw amino-acid sequence, 130 residues long: Small ribosomal subunit protein uS8 (130 aa).

Belongs to the universal ribosomal protein uS8 family. As to quaternary structure, part of the 30S ribosomal subunit.

Functionally, one of the primary rRNA binding proteins, it binds directly to 16S rRNA central domain where it helps coordinate assembly of the platform of the 30S subunit. The chain is Small ribosomal subunit protein uS8 from Pyrobaculum islandicum (strain DSM 4184 / JCM 9189 / GEO3).